The following is a 229-amino-acid chain: MAKKKAFIPFFYFLSIVFLPWLISLCCNKSLKTWITNWWNTRQCETFLNDIQEKSFLEKFIQLEELFQLDEMIKEYPETNLQQFRLGIHKETIQFIKIHNEYNIHTILHFSTNLISFVILSGYSFWGKEKLFILNSWVQEFLYNLSDTIKAFSILLLTDLCIGFHSPHGWELMIGYIYKDFGFAHYEQILSGLVSTFPVILDTIFKYWIFRYLNRVSPSLVVIYHAIND.

Transmembrane regions (helical) follow at residues 6 to 26 (AFIP…ISLC), 107 to 127 (ILHF…SFWG), and 189 to 209 (ILSG…KYWI).

This sequence belongs to the CemA family.

Its subcellular location is the plastid. The protein localises to the chloroplast inner membrane. It carries out the reaction K(+)(in) + H(+)(out) = K(+)(out) + H(+)(in). Functionally, contributes to K(+)/H(+) antiport activity by supporting proton efflux to control proton extrusion and homeostasis in chloroplasts in a light-dependent manner to modulate photosynthesis. Prevents excessive induction of non-photochemical quenching (NPQ) under continuous-light conditions. Indirectly promotes efficient inorganic carbon uptake into chloroplasts. The protein is Potassium/proton antiporter CemA of Arabidopsis thaliana (Mouse-ear cress).